We begin with the raw amino-acid sequence, 275 residues long: Large ribosomal subunit protein uL2c (275 aa).

The segment at 225-259 (KNPVDHPHGGGEGRAPIGRSTPVTPWGKPALGRRT) is disordered.

Belongs to the universal ribosomal protein uL2 family. Part of the 50S ribosomal subunit.

It localises to the plastid. It is found in the cyanelle. The polypeptide is Large ribosomal subunit protein uL2c (rpl2) (Cyanophora paradoxa).